We begin with the raw amino-acid sequence, 177 residues long: Dual-action ribosomal maturation protein DarP (177 aa).

The protein belongs to the DarP family.

It localises to the cytoplasm. Its function is as follows. Member of a network of 50S ribosomal subunit biogenesis factors which assembles along the 30S-50S interface, preventing incorrect 23S rRNA structures from forming. Promotes peptidyl transferase center (PTC) maturation. The chain is Dual-action ribosomal maturation protein DarP from Histophilus somni (strain 129Pt) (Haemophilus somnus).